A 347-amino-acid polypeptide reads, in one-letter code: S-adenosylmethionine:tRNA ribosyltransferase-isomerase (347 aa).

This sequence belongs to the QueA family. Monomer.

It is found in the cytoplasm. It carries out the reaction 7-aminomethyl-7-carbaguanosine(34) in tRNA + S-adenosyl-L-methionine = epoxyqueuosine(34) in tRNA + adenine + L-methionine + 2 H(+). It functions in the pathway tRNA modification; tRNA-queuosine biosynthesis. Functionally, transfers and isomerizes the ribose moiety from AdoMet to the 7-aminomethyl group of 7-deazaguanine (preQ1-tRNA) to give epoxyqueuosine (oQ-tRNA). This is S-adenosylmethionine:tRNA ribosyltransferase-isomerase from Bordetella parapertussis (strain 12822 / ATCC BAA-587 / NCTC 13253).